Consider the following 304-residue polypeptide: 4-diphosphocytidyl-2-C-methyl-D-erythritol kinase (304 aa).

Lys-18 is an active-site residue. 103–113 is a binding site for ATP; that stretch reads PVAAGIGGGSA. The active site involves Asp-145.

It belongs to the GHMP kinase family. IspE subfamily.

The catalysed reaction is 4-CDP-2-C-methyl-D-erythritol + ATP = 4-CDP-2-C-methyl-D-erythritol 2-phosphate + ADP + H(+). The protein operates within isoprenoid biosynthesis; isopentenyl diphosphate biosynthesis via DXP pathway; isopentenyl diphosphate from 1-deoxy-D-xylulose 5-phosphate: step 3/6. Its function is as follows. Catalyzes the phosphorylation of the position 2 hydroxy group of 4-diphosphocytidyl-2C-methyl-D-erythritol. This is 4-diphosphocytidyl-2-C-methyl-D-erythritol kinase from Rhodospirillum rubrum (strain ATCC 11170 / ATH 1.1.1 / DSM 467 / LMG 4362 / NCIMB 8255 / S1).